The sequence spans 446 residues: UDP-N-acetylmuramoylalanine--D-glutamate ligase (446 aa).

118–124 contributes to the ATP binding site; that stretch reads GSNGKST.

This sequence belongs to the MurCDEF family.

Its subcellular location is the cytoplasm. It carries out the reaction UDP-N-acetyl-alpha-D-muramoyl-L-alanine + D-glutamate + ATP = UDP-N-acetyl-alpha-D-muramoyl-L-alanyl-D-glutamate + ADP + phosphate + H(+). It participates in cell wall biogenesis; peptidoglycan biosynthesis. Its function is as follows. Cell wall formation. Catalyzes the addition of glutamate to the nucleotide precursor UDP-N-acetylmuramoyl-L-alanine (UMA). The sequence is that of UDP-N-acetylmuramoylalanine--D-glutamate ligase from Pseudoalteromonas translucida (strain TAC 125).